A 359-amino-acid polypeptide reads, in one-letter code: Probable ribonucleotide transport ATP-binding protein mkl (359 aa).

The ABC transporter domain maps to 28 to 264 (IEVNGLTKSF…DEPVVRQFLN (237 aa)). 60-67 (GPSGTGKS) lines the ATP pocket.

The protein belongs to the ABC transporter superfamily.

In terms of biological role, not known, could be involved in the transport of ribonucleotides. This is Probable ribonucleotide transport ATP-binding protein mkl (mkl) from Mycobacterium bovis (strain ATCC BAA-935 / AF2122/97).